The sequence spans 409 residues: Indian hedgehog protein (409 aa).

An N-terminal signal peptide occupies residues 1–23 (MQLPKVVLLLCAAALLLSGAVRG). A lipid anchor (N-palmitoyl cysteine) is attached at Cys-24. Glu-89, Glu-90, Asp-95, Thr-125, Glu-126, Asp-129, and Asp-131 together coordinate Ca(2+). His-140, Asp-147, and His-182 together coordinate Zn(2+). The Cholesterol glycine ester moiety is linked to residue Gly-197.

The protein belongs to the hedgehog family. Multimer. In terms of assembly, interacts with BOC and CDON. Interacts with PTCH1. Interacts with glypican GPC3. In terms of processing, cholesterylation is required for N-product targeting to lipid rafts and multimerization. Post-translationally, the C-terminal domain displays an autoproteolysis activity and a cholesterol transferase activity. Both activities result in the cleavage of the full-length protein and covalent attachment of a cholesterol moiety to the C-terminal of the newly generated N-product. The N-product is the active species in both local and long-range signaling, whereas the C-product is degraded in the endoplasmic reticulum. N-palmitoylation by HHAT of N-product is required for indian hedgehog protein N-product multimerization and full activity. In terms of tissue distribution, expressed in the marginal zone at early gastrulation. At stage 14, expression begins in the neural plate with expression becoming more prominent in the anterodorsal area at neural tube closure. At this stage, also expressed diffusely in the somitic and pre-somitic mesoderm. By the early tadpole (stages 28-30), expression is widespread throughout anterior structures with highest levels in the otic vesicle, the eye, and the branchial arches.

It is found in the cell membrane. It localises to the endoplasmic reticulum membrane. The protein localises to the golgi apparatus membrane. Its subcellular location is the secreted. It carries out the reaction glycyl-L-cysteinyl-[protein] + cholesterol + H(+) = [protein]-C-terminal glycyl cholesterol ester + N-terminal L-cysteinyl-[protein]. Signal involved in the early induction and patterning of anterodorsal ectoderm, nervous system and somites. Induces ectopic cement gland formation in embryos. It is involved in the regulation of endochondral skeleton formation, and the development of retinal pigment epithelium (RPE), photoreceptors and periocular tissues. Its function is as follows. The C-terminal part of the indian hedgehog protein precursor displays an autoproteolysis and a cholesterol transferase activity. Both activities result in the cleavage of the full-length protein into two parts followed by the covalent attachment of a cholesterol moiety to the C-terminal of the newly generated N-product. Both activities occur in the endoplasmic reticulum. In terms of biological role, the dually lipidated indian hedgehog protein N-product is a morphogen which is essential for a variety of patterning events during development. Binds to the patched (PTCH1) receptor, which functions in association with smoothened (SMO), to activate the transcription of target genes. Signal involved in the early induction and patterning of anterodorsal ectoderm, nervous system and somites. Induces ectopic cement gland formation in embryos. The sequence is that of Indian hedgehog protein from Xenopus laevis (African clawed frog).